A 603-amino-acid chain; its full sequence is DNA mismatch repair protein MutL (603 aa).

The protein belongs to the DNA mismatch repair MutL/HexB family.

Functionally, this protein is involved in the repair of mismatches in DNA. It is required for dam-dependent methyl-directed DNA mismatch repair. May act as a 'molecular matchmaker', a protein that promotes the formation of a stable complex between two or more DNA-binding proteins in an ATP-dependent manner without itself being part of a final effector complex. The polypeptide is DNA mismatch repair protein MutL (Rhodopseudomonas palustris (strain BisA53)).